The primary structure comprises 182 residues: Small ribosomal subunit protein uS4c (182 aa).

An S4 RNA-binding domain is found at 82–143 (MRLDNILFRL…KERSKVLIQN (62 aa)).

This sequence belongs to the universal ribosomal protein uS4 family. As to quaternary structure, part of the 30S ribosomal subunit. Contacts protein S5. The interaction surface between S4 and S5 is involved in control of translational fidelity.

Its subcellular location is the plastid. The protein localises to the chloroplast. In terms of biological role, one of the primary rRNA binding proteins, it binds directly to 16S rRNA where it nucleates assembly of the body of the 30S subunit. Its function is as follows. With S5 and S12 plays an important role in translational accuracy. This chain is Small ribosomal subunit protein uS4c (rps4), found in Alophia veracruzana (Mexican pine woods lily).